The chain runs to 481 residues: O-acetyltransferase andG (481 aa).

Belongs to the fumigaclavine B O-acetyltransferase family. In terms of assembly, monomer.

It participates in secondary metabolite biosynthesis; terpenoid biosynthesis. O-acetyltransferase; part of the gene cluster that mediates the biosynthesis of anditomin, a fungal meroterpenoid. The first step of the pathway is the synthesis of 3,5-dimethylorsellinic acid (DMOA) by the polyketide synthase andM. DMOA is then converted to the phthalide compound 5,7-dihydroxy-4,6-dimethylphthalide (DHDMP) by the cytochrome P450 monooxygenase andK, which is further prenylated by the prenyltransferase andD to yield farnesyl-DHDMP. Further epoxidation by the FAD-dependent monooxygenase andE leads to epoxyfarnesyl-DHDMP. The next step involves the terpene cyclase andB that converts epoxyfarnesyl-DHDMP into preandiloid A through opening of the epoxide ring followed by the cyclization of the farnesyl moiety. Preandiloid A is in turn oxidized at the C-3 hydroxyl group to yield preandiloid B by the dehydrogenase andC. The dioxygenase andA is solely responsible for the dehydrogenation of preandiloid B leading to the enone preandiloid C, as well as for the intriguing structural rearrangement to generate the bicyclo[2.2.2]octane core, transforming preandiloid C into andiconin. FAD-binding monooxygenase andJ then produces andilesin D which is reduced by dehydrogenase andI to yield andilesin A. Action of acetyltransferase andG followed by a spontaneous acetate elimination leads then to andilesin B, which is in turn substrate of the short chain dehydrogenase andH to yield andilesin C. Finally, the dioxygenase andF catalyzes the transformation of andilesin C to anditomin. This chain is O-acetyltransferase andG, found in Emericella variicolor (Aspergillus stellatus).